Here is a 645-residue protein sequence, read N- to C-terminus: MTDRPQTPLLDQIASPADLKRLSDAQLEQVAHELRQETISAVSVTGGHLGAGLGVVELTVALHSVFDTPKDKVIWDVSHQCYPHKILTGRRDRIRTLRMKDGLSGFTKRSESAFDPFGAAHSSTSISAALGFSVARDLGGVTEEGLGDAIAVIGDGAMSAGMAFEAMNNAGHLGKRLIVILNDNEMSIAPPVGALSSYLSRLYTEAPFHDLKAAAKGAVSLLPEPFREGAKRAKDMLKGMAMGGTLFESLGFSYIGPIDGHDMDQLLPVLRTVKARAAGPILIHAVTKKGKGYRPAEVARDKGHATAKFDMVTGEQKKAPSNAPSYTSVFGKTLTDLAAQDSKICAVTAAMPDGTGLNLMAERYPSRTFDVGIAEQHGVTFAAALAAGGMKPFCAMYSTFLQRGYDQVVHDVAIQRLPVRFAIDRAGLVGADGATHAGSFDIAFMANLPGMVVMAAADEAELKHMVATAAAYDAGPIAFRYPRGEGEGVEMPEQPEVLEIGKGRIIEEGSRVALLSFGTRLGEVRKAAEALAARGITPTVADARFAKPLDRDMILSLAEKHEALITIEEGAVGGFGSHVAQLLSEEAVFDTGLKFRSMVLPDTFIDQASPKDMYDSAAMNAEHIEAKVLDVLGVARLDERRLPAS.

Residues His-79 and Ala-120–Ser-122 contribute to the thiamine diphosphate site. Asp-155 contributes to the Mg(2+) binding site. Thiamine diphosphate contacts are provided by residues Gly-156 to Ala-157, Asn-184, Tyr-293, and Glu-375. Asn-184 contributes to the Mg(2+) binding site.

The protein belongs to the transketolase family. DXPS subfamily. As to quaternary structure, homodimer. The cofactor is Mg(2+). Thiamine diphosphate serves as cofactor.

It carries out the reaction D-glyceraldehyde 3-phosphate + pyruvate + H(+) = 1-deoxy-D-xylulose 5-phosphate + CO2. It participates in metabolic intermediate biosynthesis; 1-deoxy-D-xylulose 5-phosphate biosynthesis; 1-deoxy-D-xylulose 5-phosphate from D-glyceraldehyde 3-phosphate and pyruvate: step 1/1. Its function is as follows. Catalyzes the acyloin condensation reaction between C atoms 2 and 3 of pyruvate and glyceraldehyde 3-phosphate to yield 1-deoxy-D-xylulose-5-phosphate (DXP). In Ruegeria sp. (strain TM1040) (Silicibacter sp.), this protein is 1-deoxy-D-xylulose-5-phosphate synthase.